A 304-amino-acid chain; its full sequence is CD-NTase-associated protein 6 (304 aa).

75-80 provides a ligand contact to ATP; sequence GTGKTS.

The protein belongs to the AAA ATPase family. Oligomerizes. Homohexamer. Forms a 1:1:6 CdnD:Cap7:Cap6 complex.

Functionally, regulates complex assembly in a CBASS antivirus system. CBASS (cyclic oligonucleotide-based antiphage signaling system) provides immunity against bacteriophage. The CD-NTase protein synthesizes cyclic nucleotides in response to infection; these serve as specific second messenger signals. The signals activate a diverse range of effectors, leading to bacterial cell death and thus abortive phage infection. A type III-C(AAA) CBASS system. Prevents the CdnD:Cap7:Cap8 complex (also called CdnD:HORMA2:HORMA3) from synthesizing 2',3',3'-cyclic AMP-AMP-AMP (cAAA). Binds and disassembles an active CdnD:Cap7:Cap8 complex, inhibiting the complex's ability to synthesize cyclic nucleotide second messengers. An AAA+-ATPase remodeler, in the absence of foreign threat Cap6 probably maintains the Cap7 protein in an open, inactive state. Once activated (presumably by a bacteriophage protein) Cap7 binds to and activates its cognate CD-NTase (CdnD in this bacteria) to synthesize cAAA, a cyclic nucleotide second messenger. cAAA activates the NucC endonuclease which degrades all DNA in the infected cell, causing cell death and abortive phage infection. The polypeptide is CD-NTase-associated protein 6 (Pseudomonas aeruginosa).